The chain runs to 458 residues: tRNA modification GTPase MnmE (458 aa).

(6S)-5-formyl-5,6,7,8-tetrahydrofolate is bound by residues Arg30, Glu90, and Lys129. Positions 225 to 379 (GLSICLIGCP…LHQTIDTIIW (155 aa)) constitute a TrmE-type G domain. Asn235 provides a ligand contact to K(+). GTP-binding positions include 235-240 (NVGKSS), 254-260 (SPIPGTT), and 279-282 (DTAG). A Mg(2+)-binding site is contributed by Ser239. 3 residues coordinate K(+): Ser254, Ile256, and Thr259. Thr260 lines the Mg(2+) pocket. A (6S)-5-formyl-5,6,7,8-tetrahydrofolate-binding site is contributed by Lys458.

The protein belongs to the TRAFAC class TrmE-Era-EngA-EngB-Septin-like GTPase superfamily. TrmE GTPase family. In terms of assembly, homodimer. Heterotetramer of two MnmE and two MnmG subunits. Requires K(+) as cofactor.

The protein localises to the cytoplasm. Exhibits a very high intrinsic GTPase hydrolysis rate. Involved in the addition of a carboxymethylaminomethyl (cmnm) group at the wobble position (U34) of certain tRNAs, forming tRNA-cmnm(5)s(2)U34. The protein is tRNA modification GTPase MnmE of Protochlamydia amoebophila (strain UWE25).